Reading from the N-terminus, the 147-residue chain is Large ribosomal subunit protein uL15 (147 aa).

Over residues 1–28 (MIRRRKKVRKLRGSHTHGWGCKKKHRGG) the composition is skewed to basic residues. Positions 1 to 43 (MIRRRKKVRKLRGSHTHGWGCKKKHRGGGSKGGRGMAGTGKRN) are disordered. Residues 29–38 (GSKGGRGMAG) are compositionally biased toward gly residues.

Belongs to the universal ribosomal protein uL15 family. As to quaternary structure, part of the 50S ribosomal subunit.

In terms of biological role, binds to the 23S rRNA. The polypeptide is Large ribosomal subunit protein uL15 (Pyrococcus horikoshii (strain ATCC 700860 / DSM 12428 / JCM 9974 / NBRC 100139 / OT-3)).